Reading from the N-terminus, the 447-residue chain is MAEDIKSKVIQAKKASIELSSVSTEVKNLALEAMAQALDKERKAILDANAKDLEAAAELKKKGKLTQALVDRLKVSDSKIDGMIAGIRDVIKLKDPVGDTLSTLELDKDLILYQVSCPIGLIGVIFESRPDVVPQVMSLCLKSGNATIFKGGSEARESNRTIFQILVKAIESTDGMPAGAFQLMETREEIMDLLSLDAYVDLLIPRGSNEFVKFIQENTKISVLGHTSGICHIYVDEYVDLDTAWKVCFDAKVQYPAVCNAIETLLINRKIADTFLPKMAEMYLSAGVELRCDEDSYALLEKRGLSPLSRATEEDWSLEYNDLILSIKLVDTIKEAIDHINTFGSHHTDGIITEDASRRKAFTALVDSSSVMVNASTRFADGYRYGKGAEVGISTNKIHSRGPVGMEGLLIYKYILLGKGQVVADYAGENAKPYTHRKLDLKFEDVN.

This sequence belongs to the gamma-glutamyl phosphate reductase family.

The protein localises to the cytoplasm. It catalyses the reaction L-glutamate 5-semialdehyde + phosphate + NADP(+) = L-glutamyl 5-phosphate + NADPH + H(+). It functions in the pathway amino-acid biosynthesis; L-proline biosynthesis; L-glutamate 5-semialdehyde from L-glutamate: step 2/2. Catalyzes the NADPH-dependent reduction of L-glutamate 5-phosphate into L-glutamate 5-semialdehyde and phosphate. The product spontaneously undergoes cyclization to form 1-pyrroline-5-carboxylate. The protein is Gamma-glutamyl phosphate reductase of Methanosarcina barkeri (strain Fusaro / DSM 804).